The primary structure comprises 801 residues: Na(+)/H(+) antiporter subunit A1 (801 aa).

20 helical membrane-spanning segments follow: residues 1–21, 30–50, 79–99, 117–137, 166–186, 206–226, 228–250, 265–285, 300–320, 337–357, 373–393, 427–447, 472–492, 522–542, 591–611, 623–643, 646–666, 671–691, 707–727, and 764–784; these read MSLL…IPFL, LGWF…SLIS, LGLL…LYSI, LFMG…LYLF, LIIT…LSLA, PFFI…SAQV, FYIW…HSAT, IFAI…ITLF, ILAF…GIGA, FVAA…LFMI, LGGL…TTLS, LGIL…VYSI, ILML…GLFP, GITP…LLLI, LVII…SVPF, VFEG…IFAK, LFSI…FIFF, LALT…LCFY, LTNA…GLIG, and MDTL…YTMI.

This sequence belongs to the CPA3 antiporters (TC 2.A.63) subunit A family. In terms of assembly, may form a heterooligomeric complex that consists of seven subunits: mnhA1, mnhB1, mnhC1, mnhD1, mnhE1, mnhF1 and mnhG1.

It localises to the cell membrane. Functionally, mnh complex is a Na(+)/H(+) antiporter involved in Na(+) excretion. The protein is Na(+)/H(+) antiporter subunit A1 (mnhA1) of Staphylococcus epidermidis (strain ATCC 35984 / DSM 28319 / BCRC 17069 / CCUG 31568 / BM 3577 / RP62A).